A 23-amino-acid polypeptide reads, in one-letter code: Aurein-4.2 (23 aa).

The protein belongs to the frog skin active peptide (FSAP) family. Aurein subfamily. As to expression, expressed by the skin dorsal glands.

The protein resides in the secreted. In terms of biological role, has no antimicrobial or anticancer activity. This is Aurein-4.2 from Ranoidea aurea (Green and golden bell frog).